A 181-amino-acid polypeptide reads, in one-letter code: MTATLQRESVGTGRVVWFTGLSGAGKSTLASALYEELIARGEQVELLDGDAVRENLSKGLGFTKADRDTNVRRIAFVAGLLAKHGVTVLVSAISPYAETRREVLANLPNPTEVFVDAPLAVVTERDVKGLYLKALAGEIPHFTGVSDPYEAPENPDLHLRTDRISVQDGLKQLLDHLGVNA.

An ATP-binding site is contributed by 20 to 27 (GLSGAGKS). Residue S94 is the Phosphoserine intermediate of the active site.

The protein belongs to the APS kinase family.

It carries out the reaction adenosine 5'-phosphosulfate + ATP = 3'-phosphoadenylyl sulfate + ADP + H(+). The protein operates within sulfur metabolism; hydrogen sulfide biosynthesis; sulfite from sulfate: step 2/3. Its function is as follows. Catalyzes the synthesis of activated sulfate. This Deinococcus deserti (strain DSM 17065 / CIP 109153 / LMG 22923 / VCD115) protein is Adenylyl-sulfate kinase.